Here is a 223-residue protein sequence, read N- to C-terminus: Deoxyribose-phosphate aldolase (223 aa).

The active-site Proton donor/acceptor is the Asp-91. Lys-153 (schiff-base intermediate with acetaldehyde) is an active-site residue. The active-site Proton donor/acceptor is Lys-182.

It belongs to the DeoC/FbaB aldolase family. DeoC type 1 subfamily.

It localises to the cytoplasm. It catalyses the reaction 2-deoxy-D-ribose 5-phosphate = D-glyceraldehyde 3-phosphate + acetaldehyde. Its pathway is carbohydrate degradation; 2-deoxy-D-ribose 1-phosphate degradation; D-glyceraldehyde 3-phosphate and acetaldehyde from 2-deoxy-alpha-D-ribose 1-phosphate: step 2/2. Catalyzes a reversible aldol reaction between acetaldehyde and D-glyceraldehyde 3-phosphate to generate 2-deoxy-D-ribose 5-phosphate. This is Deoxyribose-phosphate aldolase from Yersinia pseudotuberculosis serotype O:1b (strain IP 31758).